A 248-amino-acid chain; its full sequence is MSLIPSLSLLLMSMVAASYSETVTCEDAQKTCPAVIACSSPGINGFPGKDGRDGTKGEKGEPGQGLRGLQGPPGKLGPPGNPGPSGSPGPKGQKGDPGKSPDCDSSLAVSERKALQTEMARIKKWLTFSLGKQVGNKFFLTNGEMMTFEKVKALCVKFQASVATPRNAAENRAIQNLIKEEAFMGITDEKTEGQFVDLTGNRLTYTNWNEGEPNNAGSDEDCVLLLKNGLWNDVPCSSSHLAVCEFPI.

Positions 1–20 (MSLIPSLSLLLMSMVAASYS) are cleaved as a signal peptide. The region spanning 42-99 (GINGFPGKDGRDGTKGEKGEPGQGLRGLQGPPGKLGPPGNPGPSGSPGPKGQKGDPGK) is the Collagen-like domain. Positions 43–107 (INGFPGKDGR…GKSPDCDSSL (65 aa)) are disordered. The residue at position 47 (Pro-47) is a 4-hydroxyproline. Basic and acidic residues predominate over residues 49-61 (KDGRDGTKGEKGE). Residues Pro-73, Pro-79, Pro-82, and Pro-88 each carry the 4-hydroxyproline modification. The segment covering 75–87 (KLGPPGNPGPSGS) has biased composition (pro residues). Residues 93–102 (QKGDPGKSPD) are compositionally biased toward basic and acidic residues. Residues 112–130 (RKALQTEMARIKKWLTFSL) adopt a coiled-coil conformation. A C-type lectin domain is found at 134-245 (VGNKFFLTNG…CSSSHLAVCE (112 aa)). Intrachain disulfides connect Cys-155-Cys-244 and Cys-222-Cys-236.

As to quaternary structure, oligomeric complex of 3 or more homotrimers. Interacts with MASP1 and MASP2. Interacts with MEP1A and MEP1B and may inhibit their catalytic activity. In terms of processing, hydroxylation on proline residues within the sequence motif, GXPG, is most likely to be 4-hydroxy as this fits the requirement for 4-hydroxylation in vertebrates.

The protein resides in the secreted. Functionally, calcium-dependent lectin involved in innate immune defense. Binds mannose, fucose and N-acetylglucosamine on different microorganisms and activates the lectin complement pathway. Binds to late apoptotic cells, as well as to apoptotic blebs and to necrotic cells, but not to early apoptotic cells, facilitating their uptake by macrophages. The sequence is that of Mannose-binding protein C (MBL2) from Hylobates lar (Lar gibbon).